The primary structure comprises 505 residues: Beta-glucosidase 3 (505 aa).

The N-terminal stretch at Met-1–Gly-22 is a signal peptide. Positions 43 and 143 each coordinate a beta-D-glucoside. The Proton donor role is filled by Glu-189. An intrachain disulfide couples Cys-208 to Cys-217. The N-linked (GlcNAc...) asparagine glycan is linked to Asn-221. The a beta-D-glucoside site is built by Tyr-333 and Glu-405. Catalysis depends on Glu-405, which acts as the Nucleophile. N-linked (GlcNAc...) asparagine glycosylation is found at Asn-415 and Asn-436. A beta-D-glucoside-binding residues include Trp-450 and Tyr-466.

The protein belongs to the glycosyl hydrolase 1 family.

The enzyme catalyses Hydrolysis of terminal, non-reducing beta-D-glucosyl residues with release of beta-D-glucose.. This is Beta-glucosidase 3 (BGLU3) from Oryza sativa subsp. japonica (Rice).